A 575-amino-acid chain; its full sequence is Estrogen receptor beta (575 aa).

The interval 1–160 is modulating; sequence MSSSLSPTLQ…GAVVKRDMHF (160 aa). Residues 108–151 form a disordered region; that stretch reads DTKPHTSGRHSSFLSRPKLFGKRPEDGDGDEALDDDDPSSSSSG. The segment covering 134–145 has biased composition (acidic residues); the sequence is GDGDEALDDDDP. 2 NR C4-type zinc fingers span residues 161–181 and 197–221; these read CVVC…CEGC and CPAT…LRKC. Positions 161–226 form a DNA-binding region, nuclear receptor; that stretch reads CVVCHDYASG…RLRKCYEMGM (66 aa). Residues 290 to 526 enclose the NR LBD domain; it reads SPEQLVYCIL…DLLLEMLDAN (237 aa). A compositionally biased stretch (polar residues) spans 537 to 549; sequence VCTDPVTPATSPN. Residues 537–557 are disordered; the sequence is VCTDPVTPATSPNTPLPPQLH.

This sequence belongs to the nuclear hormone receptor family. NR3 subfamily. In terms of assembly, binds DNA as a homodimer. Can form a heterodimer with ER-alpha. As to expression, ovary and testis.

Its subcellular location is the nucleus. Binds estrogens with an affinity similar to that of ER-alpha, and activates expression of reporter genes containing estrogen response elements (ERE) in an estrogen-dependent manner. The chain is Estrogen receptor beta (esr2) from Ictalurus punctatus (Channel catfish).